The chain runs to 116 residues: UPF0654 protein C869.09 (116 aa).

Residues 32–116 (LKEHGSESHY…LLEEVDDESK (85 aa)) form a disordered region. Residues 39–48 (SHYTTGTTRG) show a composition bias toward polar residues. Over residues 49–64 (QKADADDAGELREEGF) the composition is skewed to basic and acidic residues.

Belongs to the UPF0654 (con-6) family.

Its subcellular location is the cytoplasm. It is found in the nucleus. The protein is UPF0654 protein C869.09 of Schizosaccharomyces pombe (strain 972 / ATCC 24843) (Fission yeast).